The primary structure comprises 962 residues: Glycine dehydrogenase (decarboxylating) (962 aa).

Lys709 carries the N6-(pyridoxal phosphate)lysine modification.

It belongs to the GcvP family. In terms of assembly, the glycine cleavage system is composed of four proteins: P, T, L and H. Pyridoxal 5'-phosphate is required as a cofactor.

The enzyme catalyses N(6)-[(R)-lipoyl]-L-lysyl-[glycine-cleavage complex H protein] + glycine + H(+) = N(6)-[(R)-S(8)-aminomethyldihydrolipoyl]-L-lysyl-[glycine-cleavage complex H protein] + CO2. In terms of biological role, the glycine cleavage system catalyzes the degradation of glycine. The P protein binds the alpha-amino group of glycine through its pyridoxal phosphate cofactor; CO(2) is released and the remaining methylamine moiety is then transferred to the lipoamide cofactor of the H protein. In Shewanella sp. (strain MR-7), this protein is Glycine dehydrogenase (decarboxylating).